The following is a 738-amino-acid chain: Exocyst complex component 3 (738 aa).

The stretch at 28 to 91 forms a coiled coil; that stretch reads LEKVEQYRHR…DEVERLLRGV (64 aa).

This sequence belongs to the SEC6 family. The exocyst complex is composed of Sec3/Exoc1, Sec5/Exoc2, Sec6/Exoc3, Sec8/Exoc4, Sec10/Exoc5, Sec15/Exoc6, Exo70/Exoc7 and Exo84/Exoc8.

Its function is as follows. Component of the exocyst complex involved in the docking of exocytic vesicles with fusion sites on the plasma membrane. The polypeptide is Exocyst complex component 3 (Drosophila melanogaster (Fruit fly)).